A 390-amino-acid polypeptide reads, in one-letter code: Terminal nucleotidyltransferase 5C (390 aa).

Belongs to the TENT family.

The protein resides in the nucleus. The protein localises to the cytoplasm. It localises to the cytoskeleton. Its subcellular location is the microtubule organizing center. It is found in the centrosome. The enzyme catalyses RNA(n) + ATP = RNA(n)-3'-adenine ribonucleotide + diphosphate. Functionally, catalyzes the transfer of one adenosine molecule from an ATP to an mRNA poly(A) tail bearing a 3'-OH terminal group and enhances mRNA stability and gene expression. This is Terminal nucleotidyltransferase 5C from Gallus gallus (Chicken).